We begin with the raw amino-acid sequence, 390 residues long: Carbamoyl phosphate synthase small chain (390 aa).

Residues 1–198 (MTSTPTPTPT…LGEGYAVGPE (198 aa)) are CPSase. L-glutamine-binding residues include S53, G250, and G252. One can recognise a Glutamine amidotransferase type-1 domain in the interval 202-390 (RVVVLDYGVK…VGELKGRVEA (189 aa)). C279 functions as the Nucleophile in the catalytic mechanism. L-glutamine-binding residues include L280, Q283, N321, G323, and F324. Catalysis depends on residues H363 and E365.

It belongs to the CarA family. In terms of assembly, composed of two chains; the small (or glutamine) chain promotes the hydrolysis of glutamine to ammonia, which is used by the large (or ammonia) chain to synthesize carbamoyl phosphate. Tetramer of heterodimers (alpha,beta)4.

It carries out the reaction hydrogencarbonate + L-glutamine + 2 ATP + H2O = carbamoyl phosphate + L-glutamate + 2 ADP + phosphate + 2 H(+). The enzyme catalyses L-glutamine + H2O = L-glutamate + NH4(+). Its pathway is amino-acid biosynthesis; L-arginine biosynthesis; carbamoyl phosphate from bicarbonate: step 1/1. It functions in the pathway pyrimidine metabolism; UMP biosynthesis via de novo pathway; (S)-dihydroorotate from bicarbonate: step 1/3. In terms of biological role, small subunit of the glutamine-dependent carbamoyl phosphate synthetase (CPSase). CPSase catalyzes the formation of carbamoyl phosphate from the ammonia moiety of glutamine, carbonate, and phosphate donated by ATP, constituting the first step of 2 biosynthetic pathways, one leading to arginine and/or urea and the other to pyrimidine nucleotides. The small subunit (glutamine amidotransferase) binds and cleaves glutamine to supply the large subunit with the substrate ammonia. The protein is Carbamoyl phosphate synthase small chain of Maricaulis maris (strain MCS10) (Caulobacter maris).